The sequence spans 270 residues: MISKINFVKMHGLGNDFVVVNKRDLSSSYDLSQLAKNMADRHTGIGCDQFIIYEEHDDFYEMIIYNIDGSSAKLCGNATRCLAKLIYLDTGKKDITVMVGNKKLLCNVEDENNISVNVGKVSFNEVWMPSRDKIWELAERYMIDLKETICVDIGNPHLVIFSKLEPQDQKIVGEKLQAKELFADGVNVNFAEVKDNKIYLSVWERGAGLTLACGSGACGSFAAGLKLGFIHSPSTVVFKYGSLTMKEENGNIIMQGAATLVARGEYYCEQ.

Positions 15, 49, and 66 each coordinate substrate. Cysteine 75 functions as the Proton donor in the catalytic mechanism. Residues 76-77, asparagine 155, asparagine 187, and 204-205 each bind substrate; these read GN and ER. The active-site Proton acceptor is cysteine 213. 214 to 215 contributes to the substrate binding site; that stretch reads GS.

The protein belongs to the diaminopimelate epimerase family. In terms of assembly, homodimer.

The protein localises to the cytoplasm. The catalysed reaction is (2S,6S)-2,6-diaminopimelate = meso-2,6-diaminopimelate. It participates in amino-acid biosynthesis; L-lysine biosynthesis via DAP pathway; DL-2,6-diaminopimelate from LL-2,6-diaminopimelate: step 1/1. Its function is as follows. Catalyzes the stereoinversion of LL-2,6-diaminopimelate (L,L-DAP) to meso-diaminopimelate (meso-DAP), a precursor of L-lysine and an essential component of the bacterial peptidoglycan. This Rickettsia felis (strain ATCC VR-1525 / URRWXCal2) (Rickettsia azadi) protein is Diaminopimelate epimerase.